The following is a 151-amino-acid chain: Histone H2A.2.2 (151 aa).

An N-acetylmethionine modification is found at methionine 1. The disordered stretch occupies residues glutamate 129–alanine 151. Residues lysine 139–alanine 151 are compositionally biased toward basic residues. 2 consecutive short sequence motifs (SPKK motif) follow at residues serine 140–lysine 143 and serine 147–lysine 150.

This sequence belongs to the histone H2A family. As to quaternary structure, the nucleosome is a histone octamer containing two molecules each of H2A, H2B, H3 and H4 assembled in one H3-H4 heterotetramer and two H2A-H2B heterodimers. The octamer wraps approximately 147 bp of DNA. Phosphorylated within its C-terminal part, probably at the SPKK motifs.

Its subcellular location is the nucleus. It localises to the chromosome. Its function is as follows. Core component of nucleosome. Nucleosomes wrap and compact DNA into chromatin, limiting DNA accessibility to the cellular machineries which require DNA as a template. Histones thereby play a central role in transcription regulation, DNA repair, DNA replication and chromosomal stability. DNA accessibility is regulated via a complex set of post-translational modifications of histones, also called histone code, and nucleosome remodeling. This is Histone H2A.2.2 from Triticum aestivum (Wheat).